Reading from the N-terminus, the 842-residue chain is Translation initiation factor IF-2 (842 aa).

Residues 121–144 (TESTSVEKSESDDVTLEEESSKKV) form a disordered region. The region spanning 340–510 (PRAPVVTVMG…LLMAELLELK (171 aa)) is the tr-type G domain. Residues 349 to 356 (GHVDHGKT) are G1. 349–356 (GHVDHGKT) serves as a coordination point for GTP. Residues 374–378 (GITQH) form a G2 region. A G3 region spans residues 396–399 (DTPG). GTP is bound by residues 396 to 400 (DTPGH) and 450 to 453 (NKID). The tract at residues 450–453 (NKID) is G4. A G5 region spans residues 486–488 (SAK).

It belongs to the TRAFAC class translation factor GTPase superfamily. Classic translation factor GTPase family. IF-2 subfamily.

The protein localises to the cytoplasm. Its function is as follows. One of the essential components for the initiation of protein synthesis. Protects formylmethionyl-tRNA from spontaneous hydrolysis and promotes its binding to the 30S ribosomal subunits. Also involved in the hydrolysis of GTP during the formation of the 70S ribosomal complex. The protein is Translation initiation factor IF-2 of Ehrlichia chaffeensis (strain ATCC CRL-10679 / Arkansas).